A 368-amino-acid chain; its full sequence is 4-hydroxy-3-methylbut-2-en-1-yl diphosphate synthase (flavodoxin) (368 aa).

[4Fe-4S] cluster-binding residues include Cys271, Cys274, Cys306, and Glu313.

The protein belongs to the IspG family. [4Fe-4S] cluster is required as a cofactor.

The enzyme catalyses (2E)-4-hydroxy-3-methylbut-2-enyl diphosphate + oxidized [flavodoxin] + H2O + 2 H(+) = 2-C-methyl-D-erythritol 2,4-cyclic diphosphate + reduced [flavodoxin]. It participates in isoprenoid biosynthesis; isopentenyl diphosphate biosynthesis via DXP pathway; isopentenyl diphosphate from 1-deoxy-D-xylulose 5-phosphate: step 5/6. Converts 2C-methyl-D-erythritol 2,4-cyclodiphosphate (ME-2,4cPP) into 1-hydroxy-2-methyl-2-(E)-butenyl 4-diphosphate. The chain is 4-hydroxy-3-methylbut-2-en-1-yl diphosphate synthase (flavodoxin) from Mannheimia succiniciproducens (strain KCTC 0769BP / MBEL55E).